The primary structure comprises 63 residues: Metallothionein-2 (63 aa).

The protein belongs to the metallothionein superfamily. Type 6 family.

This protein binds cations of several transition elements. In Caenorhabditis elegans, this protein is Metallothionein-2 (mtl-2).